The chain runs to 517 residues: Shugoshin 1 (517 aa).

The stretch at 1–89 (MAKERCQKRS…DVILQLRKEC (89 aa)) forms a coiled coil. Positions 1–176 (MAKERCQKRS…DFDSGKVEST (176 aa)) are necessary for interaction with PPP2CA and PPP2R1A. Disordered stretches follow at residues 107–136 (QSEETTQNWKGRPSDVVSSIDNTTRDLSGK), 149–173 (PYQTTEPSPAVTPETQGCDFDSGKV), 267–317 (PEQI…TLDG), and 334–427 (HPTP…QESP). Positions 268 to 291 (EQIESKHKRARKRRAEQRRTKQRC) form a coiled coil. The segment covering 273–302 (KHKRARKRRAEQRRTKQRCKSKSSLRSKGN) has biased composition (basic residues). The span at 341-363 (KMNNGCNKETDSSNSEVSDLECS) shows a compositional bias: polar residues. Residues 379–390 (RLRDYRESERAV) are compositionally biased toward basic and acidic residues. The residue at position 426 (Ser426) is a Phosphoserine. The PXVXL/I motif signature appears at 441 to 445 (PRVKI). The D-box signature appears at 447–455 (KPSLPPKRR). At Ser497 the chain carries Phosphoserine; by NEK2.

Belongs to the shugoshin family. As to quaternary structure, interacts with PPP2CA (or PPP2CB), PPP2R1B, PPP2R5A, PPP2R5B, PPP2R5C, PPP2R5D, PPP2R5E, SET, LRRC59, RBM10 (or RBM5), RPL10A, RPL28, RPL7, RPL7A and RPLP1. Interaction with protein phosphatase 2A occurs most probably through direct binding to the regulatory B56 subunits: PPP2R1B, PPP2R5A, PPP2R5B, PPP2R5C, PPP2R5D, PPP2R5E. Interacts with PPP2R1A and NEK2. Interacts with CDCA8. Post-translationally, ubiquitinated and degraded during mitotic exit by APC/C-Cdh1. Phosphorylation by NEK2 is essential for chromosome congression in mitosis and for the proper attachment of spindle microtubule to the kinetochore. Phosphorylated by PLK1 and AUKRB. Ubiquitously expressed in proliferating cells. Moderately expressed in the oocytes.

The protein resides in the nucleus. The protein localises to the chromosome. It localises to the centromere. It is found in the kinetochore. Its subcellular location is the cytoplasm. The protein resides in the cytoskeleton. The protein localises to the spindle pole. It localises to the microtubule organizing center. It is found in the centrosome. Its subcellular location is the nucleus speckle. Its function is as follows. Plays a central role in chromosome cohesion during mitosis by preventing premature dissociation of cohesin complex from centromeres after prophase, when most of cohesin complex dissociates from chromosomes arms. May act by preventing phosphorylation of the STAG2 subunit of cohesin complex at the centromere, ensuring cohesin persistence at centromere until cohesin cleavage by ESPL1/separase at anaphase. Essential for proper chromosome segregation during mitosis and this function requires interaction with PPP2R1A. Its phosphorylated form is necessary for chromosome congression and for the proper attachment of spindle microtubule to the kinetochore. Necessary for kinetochore localization of PLK1 and CENPF. May play a role in the tension sensing mechanism of the spindle-assembly checkpoint by regulating PLK1 kinetochore affinity. Involved in centromeric enrichment of AUKRB in prometaphase. The sequence is that of Shugoshin 1 from Mus musculus (Mouse).